A 209-amino-acid polypeptide reads, in one-letter code: Ribosomal RNA small subunit methyltransferase G (209 aa).

Residues glycine 75, leucine 80, 126–127, and arginine 141 contribute to the S-adenosyl-L-methionine site; that span reads VE.

The protein belongs to the methyltransferase superfamily. RNA methyltransferase RsmG family.

The protein localises to the cytoplasm. The enzyme catalyses guanosine(527) in 16S rRNA + S-adenosyl-L-methionine = N(7)-methylguanosine(527) in 16S rRNA + S-adenosyl-L-homocysteine. Specifically methylates the N7 position of guanine in position 527 of 16S rRNA. The polypeptide is Ribosomal RNA small subunit methyltransferase G (Colwellia psychrerythraea (strain 34H / ATCC BAA-681) (Vibrio psychroerythus)).